The sequence spans 87 residues: Acyl-CoA-binding protein 2 (87 aa).

In terms of domain architecture, ACB spans 2–87 (VSQLFEEKAK…VDNLIAKYSS (86 aa)). Residues 29-33 (YGLYK), Lys-51, Lys-55, and Tyr-74 each bind an acyl-CoA.

This sequence belongs to the ACBP family.

In terms of biological role, binds medium- and long-chain acyl-CoA esters with very high affinity and may function as an intracellular carrier of acyl-CoA esters. This Saccharomyces pastorianus (strain ATCC 76670 / Carlsberg bottom yeast no.2 / CBS 1503 / CLIB 180 / NBRC 10610 / NRRL Y-1525) (Saaz-type lager yeast) protein is Acyl-CoA-binding protein 2 (ACB2).